The chain runs to 23 residues: Paralytic peptide 1 (23 aa).

Cys7 and Cys19 are disulfide-bonded.

Belongs to the GBP/PSP1/paralytic peptide family. As to expression, hemolymph.

Its function is as follows. Causes rapid, rigid paralysis when injected into Lepidopteran larvae. The physiological role may be to reduce hemolymph loss following injury and promote wound healing. This chain is Paralytic peptide 1, found in Manduca sexta (Tobacco hawkmoth).